The following is a 107-amino-acid chain: Phosphoribosyl-ATP pyrophosphatase (107 aa).

The protein belongs to the PRA-PH family.

The protein resides in the cytoplasm. The enzyme catalyses 1-(5-phospho-beta-D-ribosyl)-ATP + H2O = 1-(5-phospho-beta-D-ribosyl)-5'-AMP + diphosphate + H(+). The protein operates within amino-acid biosynthesis; L-histidine biosynthesis; L-histidine from 5-phospho-alpha-D-ribose 1-diphosphate: step 2/9. The chain is Phosphoribosyl-ATP pyrophosphatase from Bacillus cereus (strain AH187).